The following is a 132-amino-acid chain: UPF0251 protein PTH_0588 (132 aa).

This sequence belongs to the UPF0251 family.

This chain is UPF0251 protein PTH_0588, found in Pelotomaculum thermopropionicum (strain DSM 13744 / JCM 10971 / SI).